A 245-amino-acid polypeptide reads, in one-letter code: 1-(5-phosphoribosyl)-5-[(5-phosphoribosylamino)methylideneamino] imidazole-4-carboxamide isomerase (245 aa).

D7 acts as the Proton acceptor in catalysis. D129 acts as the Proton donor in catalysis.

This sequence belongs to the HisA/HisF family.

It is found in the cytoplasm. The catalysed reaction is 1-(5-phospho-beta-D-ribosyl)-5-[(5-phospho-beta-D-ribosylamino)methylideneamino]imidazole-4-carboxamide = 5-[(5-phospho-1-deoxy-D-ribulos-1-ylimino)methylamino]-1-(5-phospho-beta-D-ribosyl)imidazole-4-carboxamide. It functions in the pathway amino-acid biosynthesis; L-histidine biosynthesis; L-histidine from 5-phospho-alpha-D-ribose 1-diphosphate: step 4/9. The sequence is that of 1-(5-phosphoribosyl)-5-[(5-phosphoribosylamino)methylideneamino] imidazole-4-carboxamide isomerase from Serratia proteamaculans (strain 568).